Reading from the N-terminus, the 503-residue chain is Poxin-Schlafen (503 aa).

Histidine 15 acts as the Proton donor in catalysis. Tyrosine 136 serves as the catalytic Shared with catalytic histidine of dimeric partner. Lysine 140 acts as the Proton acceptor; shared with catalytic histidine of dimeric partner in catalysis.

In the N-terminal section; belongs to the poxin family. It in the C-terminal section; belongs to the Schlafen protein family. Subgroup poxviridae B3 subfamily. In terms of assembly, homodimer.

It carries out the reaction 2',3'-cGAMP + H2O = Gp(2'-5')Ap(3') + H(+). In terms of biological role, nuclease that is responsible for viral evasion of host cGAS-STING innate immunity. Cleaves 2',3'-cGAMP which is produced by host cGAS following recognition of cytosolic DNA and blocks the subsequent 2',3'-cGAMP-mediated activation of TMEM173/STING, which normally spreads to adjacent cells and activates the interferon and NF-kappa-B immune responses. This Cynomys gunnisoni (Gunnison's prairie dog) protein is Poxin-Schlafen (OPG188).